A 316-amino-acid polypeptide reads, in one-letter code: Transaldolase A (316 aa).

Lysine 131 acts as the Schiff-base intermediate with substrate in catalysis.

Belongs to the transaldolase family. Type 1 subfamily. Homodimer.

The protein resides in the cytoplasm. It carries out the reaction D-sedoheptulose 7-phosphate + D-glyceraldehyde 3-phosphate = D-erythrose 4-phosphate + beta-D-fructose 6-phosphate. It functions in the pathway carbohydrate degradation; pentose phosphate pathway; D-glyceraldehyde 3-phosphate and beta-D-fructose 6-phosphate from D-ribose 5-phosphate and D-xylulose 5-phosphate (non-oxidative stage): step 2/3. In terms of biological role, transaldolase is important for the balance of metabolites in the pentose-phosphate pathway. The sequence is that of Transaldolase A (talA) from Escherichia coli O157:H7.